We begin with the raw amino-acid sequence, 176 residues long: Inorganic pyrophosphatase (176 aa).

Substrate is bound by residues K30, R44, and Y56. Positions 66, 71, and 103 each coordinate Mg(2+). Y140 serves as a coordination point for substrate.

It belongs to the PPase family. Homohexamer. It depends on Mg(2+) as a cofactor.

It is found in the cytoplasm. It catalyses the reaction diphosphate + H2O = 2 phosphate + H(+). Functionally, catalyzes the hydrolysis of inorganic pyrophosphate (PPi) forming two phosphate ions. The chain is Inorganic pyrophosphatase from Methanothermobacter thermautotrophicus (strain ATCC 29096 / DSM 1053 / JCM 10044 / NBRC 100330 / Delta H) (Methanobacterium thermoautotrophicum).